A 338-amino-acid polypeptide reads, in one-letter code: Ketol-acid reductoisomerase (NADP(+)) (338 aa).

In terms of domain architecture, KARI N-terminal Rossmann spans 1–181 (MKVFYDKDCD…GGGRAGIIET (181 aa)). Residues 24-27 (YGSQ), Arg-47, and Ser-52 contribute to the NADP(+) site. Residue His-107 is part of the active site. Gly-133 contacts NADP(+). The region spanning 182 to 327 (DFREETETDL…GKLRAMMPWI (146 aa)) is the KARI C-terminal knotted domain. Positions 190, 194, 226, and 230 each coordinate Mg(2+). Substrate is bound at residue Ser-251.

The protein belongs to the ketol-acid reductoisomerase family. Requires Mg(2+) as cofactor.

The enzyme catalyses (2R)-2,3-dihydroxy-3-methylbutanoate + NADP(+) = (2S)-2-acetolactate + NADPH + H(+). The catalysed reaction is (2R,3R)-2,3-dihydroxy-3-methylpentanoate + NADP(+) = (S)-2-ethyl-2-hydroxy-3-oxobutanoate + NADPH + H(+). It functions in the pathway amino-acid biosynthesis; L-isoleucine biosynthesis; L-isoleucine from 2-oxobutanoate: step 2/4. It participates in amino-acid biosynthesis; L-valine biosynthesis; L-valine from pyruvate: step 2/4. Involved in the biosynthesis of branched-chain amino acids (BCAA). Catalyzes an alkyl-migration followed by a ketol-acid reduction of (S)-2-acetolactate (S2AL) to yield (R)-2,3-dihydroxy-isovalerate. In the isomerase reaction, S2AL is rearranged via a Mg-dependent methyl migration to produce 3-hydroxy-3-methyl-2-ketobutyrate (HMKB). In the reductase reaction, this 2-ketoacid undergoes a metal-dependent reduction by NADPH to yield (R)-2,3-dihydroxy-isovalerate. The chain is Ketol-acid reductoisomerase (NADP(+)) from Bordetella petrii (strain ATCC BAA-461 / DSM 12804 / CCUG 43448).